The sequence spans 412 residues: STAGA complex 65 subunit gamma (412 aa).

The interval 81–107 is disordered; sequence AQTQSQQQTEGVKAEESEPLPSCPGSP. S106 bears the Phosphoserine mark. K269 is covalently cross-linked (Glycyl lysine isopeptide (Lys-Gly) (interchain with G-Cter in SUMO2)). S321 and S332 each carry phosphoserine. A disordered region spans residues 364–412; it reads EEPMSGMSEAGLPQSPDDSDSSYGSHSTDSLMGSSPVFNQRCRKRMRKI. Residues 384 to 393 show a composition bias toward low complexity; it reads SSYGSHSTDS.

Component of the STAGA transcription coactivator-HAT complex, at least composed of SUPT3H, SUPT7L, GCN5L2, TAF5L, TAF6L, TADA3L, TAD1L, TAF10, TAF12 and TAF9. Post-translationally, sumoylated.

The protein localises to the nucleus. The sequence is that of STAGA complex 65 subunit gamma (Supt7l) from Mus musculus (Mouse).